We begin with the raw amino-acid sequence, 119 residues long: Integration host factor subunit alpha (119 aa).

Positions 96-119 (INGQQGSGKMNGEASHEQLSAEPE) are disordered.

The protein belongs to the bacterial histone-like protein family. As to quaternary structure, heterodimer of an alpha and a beta chain.

Functionally, this protein is one of the two subunits of integration host factor, a specific DNA-binding protein that functions in genetic recombination as well as in transcriptional and translational control. This Bradyrhizobium sp. (strain BTAi1 / ATCC BAA-1182) protein is Integration host factor subunit alpha.